Reading from the N-terminus, the 446-residue chain is AP-2 complex subunit mu (446 aa).

A phosphoserine mark is found at serine 145, serine 151, and serine 152. Threonine 157 carries the post-translational modification Phosphothreonine. One can recognise an MHD domain in the interval 177–445 (KNSIYIDIVE…STRAGTCEIR (269 aa)).

Belongs to the adaptor complexes medium subunit family. As to quaternary structure, adaptor protein complex 2 (AP-2) is a heterotetramer composed of two large adaptins (alpha-type subunit apl3 and beta-type subunit apl1), a medium chain (mu-type subunit apm4) and a small adaptin (sigma-type subunit aps2).

It is found in the cell membrane. Its subcellular location is the membrane. The protein localises to the coated pit. Component of the adaptor complexes which link clathrin to receptors in coated vesicles. Clathrin-associated protein complexes are believed to interact with the cytoplasmic tails of membrane proteins, leading to their selection and concentration. AP50 is a subunit of the plasma membrane adaptor (Potential). This Schizosaccharomyces pombe (strain 972 / ATCC 24843) (Fission yeast) protein is AP-2 complex subunit mu (apm4).